Here is a 604-residue protein sequence, read N- to C-terminus: Pescadillo homolog (604 aa).

The tract at residues 275-299 (NSEPAGLIEDKEGEDNKESSKTDES) is disordered. Basic and acidic residues predominate over residues 282–299 (IEDKEGEDNKESSKTDES). Residues 337–427 (ECRSLFKNLK…IILPTEGYIV (91 aa)) enclose the BRCT domain. 2 disordered regions span residues 518-557 (KTFSNRTADNQPDVVDKSDTKEADDHMEDSHKQAEKDAAD) and 574-604 (IEINQERKKDKVNLLKKRKKNADSSASAKGR). 2 stretches are compositionally biased toward basic and acidic residues: residues 531 to 557 (VVDKSDTKEADDHMEDSHKQAEKDAAD) and 577 to 586 (NQERKKDKVN).

This sequence belongs to the pescadillo family.

Its subcellular location is the nucleus. The protein localises to the nucleolus. The protein resides in the nucleoplasm. Its function is as follows. Required for maturation of ribosomal RNAs and formation of the large ribosomal subunit. In Oryza sativa subsp. japonica (Rice), this protein is Pescadillo homolog (PES).